A 144-amino-acid polypeptide reads, in one-letter code: Subtilase-type protease inhibitor (144 aa).

The signal sequence occupies residues 1–35 (MRNTARWAATLGLTATAVCGPLAGASLASPATAPA). 2 cysteine pairs are disulfide-bonded: cysteine 66-cysteine 81 and cysteine 102-cysteine 132.

Belongs to the protease inhibitor I16 (SSI) family. In terms of assembly, homodimer.

It is found in the secreted. Functionally, strong inhibitory activity toward subtilisin BPN' and, to a lesser extent, toward trypsin. This Streptomyces coelicolor (strain ATCC BAA-471 / A3(2) / M145) protein is Subtilase-type protease inhibitor (sti1).